The chain runs to 73 residues: uncharacterized protein (73 aa).

The protein belongs to the asfivirus I73R family.

It is found in the virion. This is an uncharacterized protein from Ornithodoros (relapsing fever ticks).